The following is a 465-amino-acid chain: Cyclin-A1 (465 aa).

The protein belongs to the cyclin family. Cyclin AB subfamily. As to quaternary structure, interacts with the CDK2 and the CDC2 protein kinases to form a serine/threonine kinase holoenzyme complex. The cyclin subunit imparts substrate specificity to the complex. Does not bind CDK4 and CDK5 (in vitro). The cyclin A1-CDK2 complex interacts with transcription factor E2F-1 and RB proteins. Found in a complex with CDK2, CABLES1 and CCNE1. Interacts with INCA1. Interacts with KLHDC9. Polyubiquitinated via 'Lys-11'-linked ubiquitin by the anaphase-promoting complex (APC/C), leading to its degradation by the proteasome. Deubiquitinated and stabilized by USP37 enables entry into S phase. Ubiquitinated during the G1 phase by the SCF(FBXO31) complex, leading to its proteasomal degradation. In terms of tissue distribution, very high levels in testis and very low levels in brain. Also found in myeloid leukemia cell lines.

Its subcellular location is the nucleus. Its function is as follows. May be involved in the control of the cell cycle at the G1/S (start) and G2/M (mitosis) transitions. May primarily function in the control of the germline meiotic cell cycle and additionally in the control of mitotic cell cycle in some somatic cells. The polypeptide is Cyclin-A1 (CCNA1) (Homo sapiens (Human)).